We begin with the raw amino-acid sequence, 212 residues long: Thiamine-phosphate synthase (212 aa).

4-amino-2-methyl-5-(diphosphooxymethyl)pyrimidine contacts are provided by residues Gln-39 to Lys-43 and Asn-71. Positions 72 and 91 each coordinate Mg(2+). 4-amino-2-methyl-5-(diphosphooxymethyl)pyrimidine is bound at residue Ser-110. 2-[(2R,5Z)-2-carboxy-4-methylthiazol-5(2H)-ylidene]ethyl phosphate is bound at residue Thr-137–Thr-139. Lys-140 lines the 4-amino-2-methyl-5-(diphosphooxymethyl)pyrimidine pocket. Position 168 (Gly-168) interacts with 2-[(2R,5Z)-2-carboxy-4-methylthiazol-5(2H)-ylidene]ethyl phosphate.

Belongs to the thiamine-phosphate synthase family. The cofactor is Mg(2+).

It carries out the reaction 2-[(2R,5Z)-2-carboxy-4-methylthiazol-5(2H)-ylidene]ethyl phosphate + 4-amino-2-methyl-5-(diphosphooxymethyl)pyrimidine + 2 H(+) = thiamine phosphate + CO2 + diphosphate. The catalysed reaction is 2-(2-carboxy-4-methylthiazol-5-yl)ethyl phosphate + 4-amino-2-methyl-5-(diphosphooxymethyl)pyrimidine + 2 H(+) = thiamine phosphate + CO2 + diphosphate. It catalyses the reaction 4-methyl-5-(2-phosphooxyethyl)-thiazole + 4-amino-2-methyl-5-(diphosphooxymethyl)pyrimidine + H(+) = thiamine phosphate + diphosphate. The protein operates within cofactor biosynthesis; thiamine diphosphate biosynthesis; thiamine phosphate from 4-amino-2-methyl-5-diphosphomethylpyrimidine and 4-methyl-5-(2-phosphoethyl)-thiazole: step 1/1. Condenses 4-methyl-5-(beta-hydroxyethyl)thiazole monophosphate (THZ-P) and 2-methyl-4-amino-5-hydroxymethyl pyrimidine pyrophosphate (HMP-PP) to form thiamine monophosphate (TMP). The protein is Thiamine-phosphate synthase of Acidothermus cellulolyticus (strain ATCC 43068 / DSM 8971 / 11B).